Reading from the N-terminus, the 177-residue chain is FCS-Like Zinc finger 1 (177 aa).

Low complexity predominate over residues 22 to 46 (SLSEMEAGFSGNNNNSNNHGNPQNG). Disordered regions lie at residues 22–49 (SLSE…GVVS) and 134–177 (ERDE…VAAA). The segment at 96 to 140 (HFLDSCFLCKKPLGDNRDIYMYRGDTPFCSEECRQEQIERDEAKE) adopts an FLZ-type zinc-finger fold. Basic and acidic residues-rich tracts occupy residues 134–143 (ERDEAKEKKQ) and 154–168 (RRKE…RDYA).

The protein belongs to the FLZ family. Interacts with KIN10 and KIN11 via its FLZ-type zinc finger domain. Interacts with KINB1, KINB2 and KINB3 via its N-terminal part. Interacts with DSP3 and BBX21 via its FLZ-type zinc finger domain. Forms heterodimer with FLZ7 and FLZ15 in vitro.

Its subcellular location is the nucleus. It localises to the cytoplasm. Functionally, may act as an adapter to facilitate the interaction of SnRK1 complex with effector proteins, conferring tissue- and stimulus-type specific differences in the SnRK1 regulation pathway. In Arabidopsis thaliana (Mouse-ear cress), this protein is FCS-Like Zinc finger 1.